The sequence spans 316 residues: Protoheme IX farnesyltransferase (316 aa).

Residues 1–21 are disordered; that stretch reads MAKSQALGNAPLTSTVAENAT. The span at 11–21 shows a compositional bias: polar residues; sequence PLTSTVAENAT. A run of 9 helical transmembrane segments spans residues 42 to 62, 67 to 87, 115 to 135, 136 to 156, 163 to 183, 189 to 209, 235 to 255, 256 to 276, and 295 to 315; these read VVAM…PGIP, VILG…FNHV, VVFA…LNAL, TAWL…VWLK, IVIG…AVTG, ALLL…ALAI, MVLL…LTGM, SGGV…GYAL, and IWHL…TSLM.

Belongs to the UbiA prenyltransferase family. Protoheme IX farnesyltransferase subfamily.

It localises to the cell inner membrane. It catalyses the reaction heme b + (2E,6E)-farnesyl diphosphate + H2O = Fe(II)-heme o + diphosphate. It functions in the pathway porphyrin-containing compound metabolism; heme O biosynthesis; heme O from protoheme: step 1/1. Converts heme B (protoheme IX) to heme O by substitution of the vinyl group on carbon 2 of heme B porphyrin ring with a hydroxyethyl farnesyl side group. This is Protoheme IX farnesyltransferase from Photobacterium profundum (strain SS9).